Consider the following 503-residue polypeptide: Aromatase (503 aa).

3 helical membrane-spanning segments follow: residues 19–39, 51–71, and 303–323; these read EVAPVASIAILLLTGFLLLVW, GYFLGIGPLISHCRFLWMGIG, and MLIAAPDTMSVSVFFMLFLIA. Substrate is bound by residues Asp309 and Met374. Residue Cys437 participates in heme binding.

Belongs to the cytochrome P450 family. The cofactor is heme.

It is found in the endoplasmic reticulum membrane. Its subcellular location is the microsome membrane. It carries out the reaction testosterone + 3 reduced [NADPH--hemoprotein reductase] + 3 O2 = 17beta-estradiol + formate + 3 oxidized [NADPH--hemoprotein reductase] + 4 H2O + 4 H(+). It catalyses the reaction androst-4-ene-3,17-dione + 3 reduced [NADPH--hemoprotein reductase] + 3 O2 = estrone + formate + 3 oxidized [NADPH--hemoprotein reductase] + 4 H2O + 4 H(+). The catalysed reaction is androst-4-ene-3,17-dione + reduced [NADPH--hemoprotein reductase] + O2 = 19-hydroxyandrost-4-ene-3,17-dione + oxidized [NADPH--hemoprotein reductase] + H2O + H(+). The enzyme catalyses 19-hydroxyandrost-4-ene-3,17-dione + reduced [NADPH--hemoprotein reductase] + O2 = 19-oxo-androst-4-ene-3,17-dione + oxidized [NADPH--hemoprotein reductase] + 2 H2O + H(+). It carries out the reaction 19-oxo-androst-4-ene-3,17-dione + reduced [NADPH--hemoprotein reductase] + O2 = estrone + formate + oxidized [NADPH--hemoprotein reductase] + H2O + 2 H(+). It catalyses the reaction estrone + reduced [NADPH--hemoprotein reductase] + O2 = 2-hydroxyestrone + oxidized [NADPH--hemoprotein reductase] + H2O + H(+). The catalysed reaction is 17beta-hydroxy-5alpha-androstan-3-one + reduced [NADPH--hemoprotein reductase] + O2 = 17beta,19-dihydroxy-3-oxo-5alpha-androstanone + oxidized [NADPH--hemoprotein reductase] + H2O + H(+). The enzyme catalyses 17beta,19-dihydroxy-3-oxo-5alpha-androstanone + reduced [NADPH--hemoprotein reductase] + O2 = 17beta-hydroxy-3,19-dioxo-5alpha-androstanone + oxidized [NADPH--hemoprotein reductase] + 2 H2O + H(+). It carries out the reaction 17beta-hydroxy-3,19-dioxo-5alpha-androstanone + reduced [NADPH--hemoprotein reductase] + O2 = 17beta-hydroxy-3-oxo-19-nor-5alpha-androst-1-ene + formate + oxidized [NADPH--hemoprotein reductase] + H2O + 2 H(+). It participates in steroid hormone biosynthesis. A cytochrome P450 monooxygenase that catalyzes the conversion of C19 androgens, androst-4-ene-3,17-dione (androstenedione) and testosterone to the C18 estrogens, estrone and estradiol, respectively. Catalyzes three successive oxidations of C19 androgens: two conventional oxidations at C19 yielding 19-hydroxy and 19-oxo/19-aldehyde derivatives, followed by a third oxidative aromatization step that involves C1-beta hydrogen abstraction combined with cleavage of the C10-C19 bond to yield a phenolic A ring and formic acid. Alternatively, the third oxidative reaction yields a 19-norsteroid and formic acid. Converts dihydrotestosterone to delta1,10-dehydro 19-nordihydrotestosterone and may play a role in homeostasis of this potent androgen. Also displays 2-hydroxylase activity toward estrone. Mechanistically, uses molecular oxygen inserting one oxygen atom into a substrate, and reducing the second into a water molecule, with two electrons provided by NADPH via cytochrome P450 reductase (CPR; NADPH-ferrihemoprotein reductase). The chain is Aromatase (CYP19A1) from Leucopleurus acutus (Atlantic white-sided dolphin).